A 463-amino-acid chain; its full sequence is Probable glucan endo-1,3-beta-glucosidase eglC (463 aa).

An N-terminal signal peptide occupies residues 1-18 (MQLTHLLAFALSLATSEA). N-linked (GlcNAc...) asparagine glycosylation occurs at asparagine 84. Residue glutamate 128 is the Proton donor of the active site. Asparagine 183 carries an N-linked (GlcNAc...) asparagine glycan. The active-site Nucleophile is glutamate 239. The N-linked (GlcNAc...) asparagine glycan is linked to asparagine 312. Disordered stretches follow at residues 317 to 354 (SASASSSAAGSATPVGSAVPSGSAAVNPSSSGIVSSAV) and 396 to 430 (SGSSATSTTAGSSSDSSSTNSGKSSSESSSTNSGA). The GPI-anchor amidated glycine moiety is linked to residue glycine 440. The propeptide at 441 to 463 (GASSVSGSVFGALVAVFAFVATL) is removed in mature form.

Belongs to the glycosyl hydrolase 17 family. Post-translationally, the GPI-anchor is attached to the protein in the endoplasmic reticulum and serves to target the protein to the cell surface. There, the glucosamine-inositol phospholipid moiety is cleaved off and the GPI-modified mannoprotein is covalently attached via its lipidless GPI glycan remnant to the 1,6-beta-glucan of the outer cell wall layer.

The protein localises to the cell membrane. It is found in the secreted. The protein resides in the cell wall. The catalysed reaction is Hydrolysis of (1-&gt;3)-beta-D-glucosidic linkages in (1-&gt;3)-beta-D-glucans.. Glucanases play a role in cell expansion during growth, in cell-cell fusion during mating, and in spore release during sporulation. This enzyme may be involved in beta-glucan degradation and also function biosynthetically as a transglycosylase. The sequence is that of Probable glucan endo-1,3-beta-glucosidase eglC (eglC) from Aspergillus oryzae (strain ATCC 42149 / RIB 40) (Yellow koji mold).